The chain runs to 247 residues: MKKLVLLRHGESQWNRENRFTGWVDIDLSEKGREEAKAAGQLLKDEGFVFDMAYASVLKRAIRTLWTVLDQMDLMWIPVTKSWRLNERHYGALQGLNKTETAQRHGDEQVLIWRRSYDTPPPALDADDERHPSKDRRYAALTPEELPATECLKDTVARFLPYWHETIAPQIMDGKRVIITAHGNSLRALVKYLDNISDEDIVGLNIPTGIPLVYELDDDLKPIRSYYLGDQEELKKAQEAVAKQGKA.

Residues 8–15, 21–22, Arg60, 87–90, Lys98, 114–115, and 183–184 contribute to the substrate site; these read RHGESQWN, TG, ERHY, RR, and GN. Residue His9 is the Tele-phosphohistidine intermediate of the active site. The Proton donor/acceptor role is filled by Glu87.

Belongs to the phosphoglycerate mutase family. BPG-dependent PGAM subfamily.

The catalysed reaction is (2R)-2-phosphoglycerate = (2R)-3-phosphoglycerate. Its pathway is carbohydrate degradation; glycolysis; pyruvate from D-glyceraldehyde 3-phosphate: step 3/5. Catalyzes the interconversion of 2-phosphoglycerate and 3-phosphoglycerate. The sequence is that of 2,3-bisphosphoglycerate-dependent phosphoglycerate mutase from Chlorobaculum parvum (strain DSM 263 / NCIMB 8327) (Chlorobium vibrioforme subsp. thiosulfatophilum).